A 216-amino-acid polypeptide reads, in one-letter code: Adenylate kinase (216 aa).

10–15 contacts ATP; it reads GSGKGT. Residues 30-59 form an NMP region; that stretch reads STGDMLRAAVKEGTPMGVKAKAKMDAGALV. Residues Thr-31, Arg-36, 57–59, 85–88, and Gln-92 contribute to the AMP site; these read ALV and GFPR. The tract at residues 126–163 is LID; it reads GRRTCRDCGKMYHVEFDAPAVADKCDKCGGQLFQRDDD. Arg-127 provides a ligand contact to ATP. The Zn(2+) site is built by Cys-130, Cys-133, Cys-150, and Cys-153. The AMP site is built by Arg-160 and Arg-171. Residue Lys-199 participates in ATP binding.

The protein belongs to the adenylate kinase family. As to quaternary structure, monomer.

The protein resides in the cytoplasm. It catalyses the reaction AMP + ATP = 2 ADP. Its pathway is purine metabolism; AMP biosynthesis via salvage pathway; AMP from ADP: step 1/1. Its function is as follows. Catalyzes the reversible transfer of the terminal phosphate group between ATP and AMP. Plays an important role in cellular energy homeostasis and in adenine nucleotide metabolism. In Syntrophotalea carbinolica (strain DSM 2380 / NBRC 103641 / GraBd1) (Pelobacter carbinolicus), this protein is Adenylate kinase.